Here is a 667-residue protein sequence, read N- to C-terminus: MAGSSSRNASSFGAEEDEDGALISTRGLEAFGRKVTTTAGHLIGPIDPTSSTHYQNAMSDLHKQLRRPNLQRSVFSFAKTTPTDLVRSKLSTSEIQYRALTFLPDELLRNIPENENSYSLFQGFQASLPEAGEEKGKKHRRRISRGRKLIDNASEGGSEGDGPPSVAKLKKEKEALNHRLEMMGIRKNMASSEIHGIDNKIANLNSMRRIVLDRLAGLEQEESMLEHENVENRLEEAQEQIEDAEALGKSIVGAEEGDDVENSGMESSFMSESIYEKLPSSASTSSSKGSRRHKTIRRKSMPILHEHFEPGSSIREIQAHDDMVTALDFDVPFGTMVSSALDDTVRVWDMNAGRCMGLLEGHTASVRTLQVEDNIVATGSMDATIRLWDLSKARYDPQDKIKEEQEEGEEDQLAFGEALEREQQTHIPQGTMQDCPLFTLEAHVDEVTALHFRGDTLISGSADKTLRQWDLEKGRCVQTLDVMWAAAQASATMGSTEGTWRQTGRLPDATADFVGAVQVFDAALACGTADGMVRLWDLRSGQVHRSLVGHTGPVTCLQFDDVHLVTGSLDRSIRIWDLRTGAIYDAYAYDAPITSMMFDTRRIVAAAGEDMVKVYDKTDGRHWDCGIGAQREASEEMVERNIIEKCRVKDGYMVEGRRSGMVGIWSC.

Polar residues predominate over residues 1–11; sequence MAGSSSRNASS. Disordered stretches follow at residues 1–20, 131–167, and 276–295; these read MAGS…DEDG, AGEE…PSVA, and EKLP…RHKT. The segment covering 137 to 147 has biased composition (basic residues); the sequence is KKHRRRISRGR. The stretch at 166–253 forms a coiled coil; sequence VAKLKKEKEA…AEALGKSIVG (88 aa). WD repeat units follow at residues 319–360, 361–398, 442–481, 501–546, 549–586, 588–625, and 628–666; these read AHDD…GLLE, GHTA…YDPQ, AHVD…QTLD, RQTG…VHRS, GHTG…IYDA, AYDA…HWDC, and GAQR…GIWS.

This sequence belongs to the WD repeat MDV1/CAF4 family.

The protein resides in the mitochondrion outer membrane. Functionally, involved in mitochondrial fission. Acts as an adapter protein required to form mitochondrial fission complexes. Formation of these complexes is required to promote constriction and fission of the mitochondrial compartment at a late step in mitochondrial division. The polypeptide is Mitochondrial division protein 1 (mdv1) (Sclerotinia sclerotiorum (strain ATCC 18683 / 1980 / Ss-1) (White mold)).